The sequence spans 425 residues: Probable isoprenylcysteine alpha-carbonyl methylesterase ICMEL1 (425 aa).

The span at Met-1–Ala-10 shows a compositional bias: basic and acidic residues. The tract at residues Met-1–Gly-42 is disordered. The span at Pro-24 to Ala-34 shows a compositional bias: low complexity. 2 consecutive transmembrane segments (helical) span residues Phe-99–Tyr-119 and Val-154–Leu-174. Substrate contacts are provided by residues Gly-160–Ala-162 and Gln-231–Ala-233. Residues Ser-232, Asp-334, and His-366 contribute to the active site.

It belongs to the AB hydrolase superfamily. Isoprenylcysteine methylesterase family.

Its subcellular location is the endoplasmic reticulum membrane. It is found in the golgi apparatus membrane. It catalyses the reaction [protein]-C-terminal S-[(2E,6E)-farnesyl]-L-cysteine methyl ester + H2O = [protein]-C-terminal S-[(2E,6E)-farnesyl]-L-cysteine + methanol + H(+). Functionally, catalyzes the demethylation of isoprenylcysteine methylesters. This chain is Probable isoprenylcysteine alpha-carbonyl methylesterase ICMEL1 (IMCEL1), found in Oryza sativa subsp. japonica (Rice).